The following is a 306-amino-acid chain: Porphobilinogen deaminase (306 aa).

Cysteine 240 is subject to S-(dipyrrolylmethanemethyl)cysteine.

The protein belongs to the HMBS family. Monomer. Requires dipyrromethane as cofactor.

It carries out the reaction 4 porphobilinogen + H2O = hydroxymethylbilane + 4 NH4(+). Its pathway is porphyrin-containing compound metabolism; protoporphyrin-IX biosynthesis; coproporphyrinogen-III from 5-aminolevulinate: step 2/4. Tetrapolymerization of the monopyrrole PBG into the hydroxymethylbilane pre-uroporphyrinogen in several discrete steps. This chain is Porphobilinogen deaminase, found in Thiobacillus denitrificans (strain ATCC 25259 / T1).